The chain runs to 163 residues: Small ribosomal subunit protein bS18c (163 aa).

Disordered regions lie at residues 1–52 and 144–163; these read MYIS…IGPG and NLRN…SSDC. Over residues 7–48 the composition is skewed to basic residues; the sequence is PFRKSKQPFRKSKQPFHKSKQPFRKFKQPFRKSKQPFRRRSR.

This sequence belongs to the bacterial ribosomal protein bS18 family. As to quaternary structure, part of the 30S ribosomal subunit.

It is found in the plastid. The protein resides in the chloroplast. The protein is Small ribosomal subunit protein bS18c of Saccharum hybrid (Sugarcane).